A 968-amino-acid polypeptide reads, in one-letter code: MSAQYQRFLKVLEKWPAEKSKVGSGEWTAEPAIKMSGAKIISGTAVAKSIREELRNEVTAMSKQLADFVPGLRIVQVGGREDSNVYIRMKIKAATEIGIDAAHVQLPRSITEVELLDKINDLNEDPRVHGIIVQMPLDCDTPIDSHRITDAVSPEKDVDGLHTVNEGRLAIGDLGGFLPCTPWGCLELIRRSGVEIAGARAVVLGRSKIVGTPAAELLKWANATVTVCHSKTRNLEEITRSADILVVGIGVAEMVKGSWIKPGAVVIDCGINVKPDASKASGSKLVGDVDYAEALQVAGHLTPVPGGVGPMTVAMLMKNTVRSAARFLERLAKSQWALQTLPLKPQRPVPSDIVIARAQKPKDIAVLAKEIGLEAREVSLYGNKKAKISLSVLERLKDKEVGHYVVVAGMTPTPLGEGKTTTLMGLVQALGAHKLRNTMAALRQPSQGPTFGIKGGAAGGGYAQVIPMEEFNLHLTGDIHAVSAANNLLAAQLDTRIFHENTQKDKALYDRLVPAIKGQRKFSPIQLRRLQKLGITKTDPDTLTADEYGPFARLDIDPDTIMWERVVDINDRYLRTITVGQSPTEKGISRETRFSISVASEIMAVLALSRSLEDMKQRLADMVVAFDKRGKPVTADDLGVTGALAVLLKDALEPNLMQSLEGTPVLVHAGPFANIAHGCNSIIADEVGLKLVGKNGFVCTEAGFGSDIGMEKFCNIKCRTSGRKPNAMVLVATVRAIKMHGGGAPVTPGAPLNKQYTEENLELVQKGLPNLLQHIENGKAFGMPVVVSLNAHSADTPAEHELVKKAALEAGAFAAVVSTHWADGGAGAVQLADAVIKACEQGNQFRLLYDLELPLVDKMNKIATTMYGAGKVVLSPAAEEKVKRLTDAGFGNLPICMSKVSGSFTGDAKIKGAPKGFTLDVEDVYVSAGAGFVVAMCGEVTKMPGLPTRPAIYDIDLNTETGEIEGLF.

Residues 1–338 (MSAQYQRFLK…ERLAKSQWAL (338 aa)) are methylenetetrahydrofolate dehydrogenase and cyclohydrolase. Substrate is bound by residues 86–90 (YIRMK) and 133–135 (VQM). NADP(+)-binding positions include 205–207 (GRS) and serine 230. Substrate is bound at residue 305–309 (PGGVG). Residues 339–968 (QTLPLKPQRP…TETGEIEGLF (630 aa)) form a formyltetrahydrofolate synthetase region. 413–420 (TPLGEGKT) contacts ATP.

This sequence in the N-terminal section; belongs to the tetrahydrofolate dehydrogenase/cyclohydrolase family. In the C-terminal section; belongs to the formate--tetrahydrofolate ligase family. In terms of assembly, homodimer. In terms of tissue distribution, present in all tissues.

Its subcellular location is the cytoplasm. It catalyses the reaction (6R)-5,10-methylene-5,6,7,8-tetrahydrofolate + NADP(+) = (6R)-5,10-methenyltetrahydrofolate + NADPH. The catalysed reaction is (6R)-5,10-methenyltetrahydrofolate + H2O = (6R)-10-formyltetrahydrofolate + H(+). It carries out the reaction (6S)-5,6,7,8-tetrahydrofolate + formate + ATP = (6R)-10-formyltetrahydrofolate + ADP + phosphate. It participates in one-carbon metabolism; tetrahydrofolate interconversion. This Drosophila melanogaster (Fruit fly) protein is C-1-tetrahydrofolate synthase, cytoplasmic (pug).